Reading from the N-terminus, the 126-residue chain is Holo-[acyl-carrier-protein] synthase (126 aa).

2 residues coordinate Mg(2+): D9 and E57.

It belongs to the P-Pant transferase superfamily. AcpS family. Mg(2+) serves as cofactor.

The protein resides in the cytoplasm. It carries out the reaction apo-[ACP] + CoA = holo-[ACP] + adenosine 3',5'-bisphosphate + H(+). Its function is as follows. Transfers the 4'-phosphopantetheine moiety from coenzyme A to a Ser of acyl-carrier-protein. The sequence is that of Holo-[acyl-carrier-protein] synthase from Alteromonas mediterranea (strain DSM 17117 / CIP 110805 / LMG 28347 / Deep ecotype).